The following is a 132-amino-acid chain: Neurophysin 2 (132 aa).

7 cysteine pairs are disulfide-bonded: Cys-10/Cys-54, Cys-13/Cys-27, Cys-21/Cys-44, Cys-28/Cys-34, Cys-61/Cys-73, Cys-67/Cys-85, and Cys-74/Cys-79.

This sequence belongs to the vasopressin/oxytocin family.

It is found in the secreted. Neurophysin 2 specifically binds vasopressin. In Struthio camelus (Common ostrich), this protein is Neurophysin 2.